The primary structure comprises 220 residues: 7-cyano-7-deazaguanine synthase (220 aa).

10–20 (FSGGQDSTTCL) is a binding site for ATP. Positions 188, 197, 200, and 203 each coordinate Zn(2+).

The protein belongs to the QueC family. Requires Zn(2+) as cofactor.

It catalyses the reaction 7-carboxy-7-deazaguanine + NH4(+) + ATP = 7-cyano-7-deazaguanine + ADP + phosphate + H2O + H(+). It functions in the pathway purine metabolism; 7-cyano-7-deazaguanine biosynthesis. Its function is as follows. Catalyzes the ATP-dependent conversion of 7-carboxy-7-deazaguanine (CDG) to 7-cyano-7-deazaguanine (preQ(0)). This Neisseria meningitidis serogroup C (strain 053442) protein is 7-cyano-7-deazaguanine synthase.